Here is a 543-residue protein sequence, read N- to C-terminus: CTP synthase (543 aa).

The amidoligase domain stretch occupies residues 1-265; it reads MTRYIFVTGG…DDFVVERFGL (265 aa). Residue Ser13 coordinates CTP. A UTP-binding site is contributed by Ser13. ATP is bound by residues 14-19 and Asp71; that span reads SLGKGI. The Mg(2+) site is built by Asp71 and Glu139. CTP contacts are provided by residues 146–148, 186–191, and Lys222; these read DIE and KTKPTQ. Residues 186 to 191 and Lys222 contribute to the UTP site; that span reads KTKPTQ. Positions 290-541 constitute a Glutamine amidotransferase type-1 domain; it reads TIAMVGKYME…VKAALAQHQK (252 aa). Gly351 lines the L-glutamine pocket. Cys378 serves as the catalytic Nucleophile; for glutamine hydrolysis. L-glutamine contacts are provided by residues 379-382, Glu402, and Arg469; that span reads LGMQ. Catalysis depends on residues His514 and Glu516.

This sequence belongs to the CTP synthase family. In terms of assembly, homotetramer.

It catalyses the reaction UTP + L-glutamine + ATP + H2O = CTP + L-glutamate + ADP + phosphate + 2 H(+). It carries out the reaction L-glutamine + H2O = L-glutamate + NH4(+). The catalysed reaction is UTP + NH4(+) + ATP = CTP + ADP + phosphate + 2 H(+). The protein operates within pyrimidine metabolism; CTP biosynthesis via de novo pathway; CTP from UDP: step 2/2. With respect to regulation, allosterically activated by GTP, when glutamine is the substrate; GTP has no effect on the reaction when ammonia is the substrate. The allosteric effector GTP functions by stabilizing the protein conformation that binds the tetrahedral intermediate(s) formed during glutamine hydrolysis. Inhibited by the product CTP, via allosteric rather than competitive inhibition. Its function is as follows. Catalyzes the ATP-dependent amination of UTP to CTP with either L-glutamine or ammonia as the source of nitrogen. Regulates intracellular CTP levels through interactions with the four ribonucleotide triphosphates. In Pseudomonas syringae pv. tomato (strain ATCC BAA-871 / DC3000), this protein is CTP synthase.